Here is a 329-residue protein sequence, read N- to C-terminus: Catabolite control protein A (329 aa).

The region spanning 1 to 57 (MTVTIYDVAREARVSMATVSRVVNGNQNVKPETRNKVNEVIKRLNYRPNAVARGLAS) is the HTH lacI-type domain. A DNA-binding region (H-T-H motif) is located at residues 5 to 24 (IYDVAREARVSMATVSRVVN).

Global transcriptional regulator of carbon catabolite repression (CCR) and carbon catabolite activation (CCA), which ensures optimal energy usage under diverse conditions. This Staphylococcus epidermidis (strain ATCC 12228 / FDA PCI 1200) protein is Catabolite control protein A (ccpA).